Reading from the N-terminus, the 131-residue chain is Large ribosomal subunit protein mL60 (131 aa).

A mitochondrion-targeting transit peptide spans 1–12 (MFGPFKLTSPVA).

This sequence belongs to the mitochondrion-specific ribosomal protein mL60 family. Component of the mitochondrial large ribosomal subunit (mt-LSU). Mature yeast 74S mitochondrial ribosomes consist of a small (37S) and a large (54S) subunit. The 37S small subunit contains a 15S ribosomal RNA (15S mt-rRNA) and 34 different proteins. The 54S large subunit contains a 21S rRNA (21S mt-rRNA) and 46 different proteins.

The protein resides in the mitochondrion. Functionally, component of the mitochondrial ribosome (mitoribosome), a dedicated translation machinery responsible for the synthesis of mitochondrial genome-encoded proteins, including at least some of the essential transmembrane subunits of the mitochondrial respiratory chain. The mitoribosomes are attached to the mitochondrial inner membrane and translation products are cotranslationally integrated into the membrane. The protein is Large ribosomal subunit protein mL60 (MRPL31) of Saccharomyces cerevisiae (strain ATCC 204508 / S288c) (Baker's yeast).